The primary structure comprises 543 residues: Chaperonin GroEL (543 aa).

Residues 29 to 32 (TLGP), 86 to 90 (DGTTT), Gly-413, 476 to 478 (NAA), and Asp-492 each bind ATP.

This sequence belongs to the chaperonin (HSP60) family. Forms a cylinder of 14 subunits composed of two heptameric rings stacked back-to-back. Interacts with the co-chaperonin GroES.

Its subcellular location is the cytoplasm. The catalysed reaction is ATP + H2O + a folded polypeptide = ADP + phosphate + an unfolded polypeptide.. Together with its co-chaperonin GroES, plays an essential role in assisting protein folding. The GroEL-GroES system forms a nano-cage that allows encapsulation of the non-native substrate proteins and provides a physical environment optimized to promote and accelerate protein folding. This chain is Chaperonin GroEL, found in Streptococcus pyogenes serotype M18 (strain MGAS8232).